The chain runs to 511 residues: Caspase-8 (511 aa).

Positions 1–242 (MSGHNILTQL…MDGNGIANES (242 aa)) are excised as a propeptide. Active-site residues include His-352 and Cys-393. The propeptide occupies 406–415 (KINASTKSPC).

It belongs to the peptidase C14A family. As to quaternary structure, heterotetramer that consists of two anti-parallel arranged heterodimers, each one formed by a 15 kDa (caspase-8 subunit p15) and a 10 kDa (caspase-8 subunit p10) subunit. Interacts with the N-terminus of Fadd.

Its subcellular location is the cytoplasm. It catalyses the reaction Strict requirement for Asp at position P1 and has a preferred cleavage sequence of (Leu/Asp/Val)-Glu-Thr-Asp-|-(Gly/Ser/Ala).. Its function is as follows. Effector of the programmed cell death (PCD) activators rpr, grim and W. May play an apoptotic role in the germline as well as soma. Role in immune response, required to resist Gram-negative bacterial infections by regulating DptA. Fadd interacts with Dredd, Fadd promotes cleavage of Dredd and is necessary and sufficient for enhancing Dredd-induced apoptosis. The sequence is that of Caspase-8 from Drosophila pseudoobscura pseudoobscura (Fruit fly).